The chain runs to 949 residues: MAADISWDEIKKENVDLEKIPVDEVFQQLKCSREGLSSEEGRNRLQIFGANKLEEKVENKFLKFLGFMWNPLSWVMEAAAIMAIVLANGGGRPPDWQDFVGITCLLIINSTISFIEENNAGNAAAALMANLAPKTKVLRDGRWGEQEAAILVPGDLISIKLGDIVPADARLLEGDPLKIDQSALTGESLPATKHQGDEVFSGSTCKQGEIEAVVIATGVHTFFGKAAHLVDSTNNVGHFQKVLTAIGNFCICSIGIGMLIEIIIMYPIQHRKYRDGIDNLLVLLIGGIPIAMPTVLSVTMAIGSHRLSQQGAITKRMTAIEEMAGMDVLCSDKTGTLTLNKLTVDKNLIEVFSKDVDKDYVILLSARASRVENQDAIDTSIVNMLGDPKEARAGITEVHFLPFNPVEKRTAITYIDTNGEWHRCSKGAPEQIIELCDLKGETKRRAHEIIDKFAERGLRSLGVARQRVPEKDKESAGTPWEFVGLLPLFDPPRHDSAETIRRALDLGVNVKMITGDQLAIGKETGRRLGMGTNMYPSSSLLENKDDTTGGVPVDELIEKADGFAGVFPEHKYEIVRKLQERKHIVGMTGDGVNDAPALKKADIGIAVDDATDAARSASDIVLTEPGLSVIVSAVLTSRAIFQRMKNYTIYAVSITIRIVLGFMLVALIWEFDFSPFMVLIIAILNDGTIMTISKDRVKPSPIPDSWKLKEIFATGVVLGTYMALVTVVFFWLAHDTTFFSDKFGVRSLQGKDEELIAVLYLQVSIISQALIFVTRSRSWSFVERPGLLLLIAFFVAQLIATLIATYAHWEFARIKGCGWGWCGVIWIYSIVTYIPLDILKFITRYTLSGKAWNNMIENRTAFTTKKDYGRGEREAQWALAQRTLHGLKPPESMFEDTATYTELSEIAEQAKKRAEVARLREVHTLKGHVESVVKLKGLDIDNLNQHYTV.

Topologically, residues 1-64 (MAADISWDEI…EKVENKFLKF (64 aa)) are cytoplasmic. A helical membrane pass occupies residues 65–84 (LGFMWNPLSWVMEAAAIMAI). The Extracellular portion of the chain corresponds to 85–96 (VLANGGGRPPDW). Residues 97 to 117 (QDFVGITCLLIINSTISFIEE) traverse the membrane as a helical segment. Over 118–246 (NNAGNAAAAL…GHFQKVLTAI (129 aa)) the chain is Cytoplasmic. The chain crosses the membrane as a helical span at residues 247-267 (GNFCICSIGIGMLIEIIIMYP). At 268–276 (IQHRKYRDG) the chain is on the extracellular side. A helical membrane pass occupies residues 277–294 (IDNLLVLLIGGIPIAMPT). The Cytoplasmic segment spans residues 295 to 645 (VLSVTMAIGS…TSRAIFQRMK (351 aa)). Residue D332 is the 4-aspartylphosphate intermediate of the active site. 2 residues coordinate Mg(2+): D590 and D594. A helical transmembrane segment spans residues 646–667 (NYTIYAVSITIRIVLGFMLVAL). The Extracellular portion of the chain corresponds to 668-672 (IWEFD). Residues 673-695 (FSPFMVLIIAILNDGTIMTISKD) traverse the membrane as a helical segment. Topologically, residues 696 to 711 (RVKPSPIPDSWKLKEI) are cytoplasmic. Residues 712-732 (FATGVVLGTYMALVTVVFFWL) traverse the membrane as a helical segment. The Extracellular segment spans residues 733-753 (AHDTTFFSDKFGVRSLQGKDE). A helical membrane pass occupies residues 754 to 774 (ELIAVLYLQVSIISQALIFVT). The Cytoplasmic portion of the chain corresponds to 775–786 (RSRSWSFVERPG). Residues 787–807 (LLLLIAFFVAQLIATLIATYA) form a helical membrane-spanning segment. Topologically, residues 808 to 815 (HWEFARIK) are extracellular. A helical transmembrane segment spans residues 816–836 (GCGWGWCGVIWIYSIVTYIPL). At 837 to 949 (DILKFITRYT…IDNLNQHYTV (113 aa)) the chain is on the cytoplasmic side. A Phosphothreonine modification is found at T883. S931 is modified (phosphoserine). The segment at 947-949 (YTV) is interaction with 14-3-3 proteins. Position 948 is a phosphothreonine (T948).

This sequence belongs to the cation transport ATPase (P-type) (TC 3.A.3) family. Type IIIA subfamily. Binds to 14-3-3 proteins. The binding is induced by phosphorylation of Thr-948. Binding to 14-3-3 proteins activates the H(+)-ATPase. As to expression, expressed in guard cells.

The protein resides in the membrane. The enzyme catalyses ATP + H2O + H(+)(in) = ADP + phosphate + 2 H(+)(out). Its function is as follows. The plasma membrane H(+) ATPase of plants and fungi generates a proton gradient that drives the active transport of nutrients by H(+)-symport. The resulting external acidification and/or internal alkinization may mediate growth responses. In Arabidopsis thaliana (Mouse-ear cress), this protein is ATPase 6, plasma membrane-type (AHA6).